We begin with the raw amino-acid sequence, 507 residues long: MEASWLETRWARPLHLALVFCLALVLMQAMKLYLRRQRLLRDLSPFPGPPAHWLLGHQKFLQEDNMETLDEIVKKHPCAFPCWVGPFQAFFYIYDPDYAKIFLSRTDPKMQYLHQLLTPCIGRGLLNLDGPRWFQHRCLLTPAFHQDILKPCVDTMAHSVKVMLDKWEKMWTTQETTIEVFEHINLMTLDIIMKCAFGQETNCQINGTYESYVKATFELGEIISSRLYNFWHHHDIIFKLSPKGHCFQELGKVIHQYTEKIIQDRKKILKNQVKQDDTQTSQIFLDIVLSAQAEDERAFSDADLRAEVNTFMWAGHDASAASISWLLYCLALNPEHQDRCRTEIRSILGDGSSITWEQLDEMSYTTMCIKETLRLIPPVPSISRELSKPLTLPDGHSLPAGMTVVLSIWGLHHNPAVWNDPKVFDPLRFTKENSDQRHPCAFLPFSSGPRNCIGQQFAMLELKVAIALILLHFQVAPDLTRPPAFSSHTVLRPKHGIYLHLKKLLEC.

A helical transmembrane segment spans residues 14-34 (LHLALVFCLALVLMQAMKLYL). Cys-452 lines the heme pocket.

This sequence belongs to the cytochrome P450 family. Requires heme as cofactor. In terms of tissue distribution, expressed in brain and aorta. In the brain, expressed in the Purkinje cells of the cerebellum, pyramidal neurons in the dentate gyrus of the hippocampus, cortical forebrain neurons and those of brain stem nuclei (at protein level). In addition to neurons, also expressed in cerebral vascular endothelial cells (at protein level). Also expressed in epithelial cells of the choroid plexus (at protein level). Hardly detectable in heart, lung, kidney and spleen.

The protein resides in the endoplasmic reticulum membrane. It localises to the microsome membrane. The catalysed reaction is N-(5Z,8Z,11Z,14Z-eicosatetraenoyl)-ethanolamine + reduced [NADPH--hemoprotein reductase] + O2 = N-(14,15-epoxy-5Z,8Z,11Z-eicosatrienoyl)-ethanolamine + oxidized [NADPH--hemoprotein reductase] + H2O + H(+). Functionally, a cytochrome P450 monooxygenase that selectively catalyzes the epoxidation of the last double bond of the arachidonoyl moiety of anandamide, potentially modulating endocannabinoid signaling. Has no hydroxylase activity toward various fatty acids, steroids and prostaglandins. Mechanistically, uses molecular oxygen inserting one oxygen atom into a substrate, and reducing the second into a water molecule, with two electrons provided by NADPH via cytochrome P450 reductase (CPR; NADPH-ferrihemoprotein reductase). This is Cytochrome P450 4X1 from Mus musculus (Mouse).